The chain runs to 917 residues: Major intrinsically disordered Notch2-binding receptor 1 (917 aa).

At 1-892 the chain is on the cytoplasmic side; it reads MEANQEASLF…AEFRRAKVCK (892 aa). Disordered regions lie at residues 337 to 367, 388 to 410, 461 to 483, 568 to 588, 652 to 687, 706 to 727, and 746 to 783; these read STYF…WPAK, PSEE…GPDR, SCTS…QHVL, ITNG…NVHH, SEAP…CSDA, TRPS…IASI, and NEEE…LPKQ. Over residues 461-480 the composition is skewed to polar residues; that stretch reads SCTSGQHSSDTSSVGTQTEQ. Basic and acidic residues predominate over residues 576 to 588; it reads KGDKCNRPENVHH. A Phosphoserine modification is found at Ser-712. Residues 893-913 form a helical membrane-spanning segment; it reads IAALITAAACTVILVIVVPIC. Residues 914–917 are Extracellular-facing; it reads TMKS.

Belongs to the MINAR family. Interacts with NOTCH2; this interaction increases MINAR1 stability. Interacts (via N-terminus) with DEPTOR (via PDZ domain); this interaction may stabilize DEPTOR protein by impairing its ubiquitination. In terms of tissue distribution, expressed in brain and in islets of Langerhans.

Its subcellular location is the cell membrane. In terms of biological role, intrinsically disordered protein which may negatively regulate mTOR signaling pathway by stabilizing the mTOR complex component DEPTOR. Negatively regulates angiogenesis. Negatively regulates cell growth. Negatively regulates neurite outgrowth in hippocampal neurons. This is Major intrinsically disordered Notch2-binding receptor 1 (Minar1) from Mus musculus (Mouse).